The following is a 213-amino-acid chain: 3-isopropylmalate dehydratase small subunit (213 aa).

It belongs to the LeuD family. LeuD type 1 subfamily. As to quaternary structure, heterodimer of LeuC and LeuD.

The enzyme catalyses (2R,3S)-3-isopropylmalate = (2S)-2-isopropylmalate. Its pathway is amino-acid biosynthesis; L-leucine biosynthesis; L-leucine from 3-methyl-2-oxobutanoate: step 2/4. Functionally, catalyzes the isomerization between 2-isopropylmalate and 3-isopropylmalate, via the formation of 2-isopropylmaleate. In Neisseria meningitidis serogroup A / serotype 4A (strain DSM 15465 / Z2491), this protein is 3-isopropylmalate dehydratase small subunit.